A 127-amino-acid polypeptide reads, in one-letter code: Large ribosomal subunit protein bL17 (127 aa).

The protein belongs to the bacterial ribosomal protein bL17 family. Part of the 50S ribosomal subunit. Contacts protein L32.

The polypeptide is Large ribosomal subunit protein bL17 (Vibrio vulnificus (strain CMCP6)).